The sequence spans 71 residues: Prophage lysis protein S homolog EssQ (71 aa).

It belongs to the lambda phage S protein family.

This chain is Prophage lysis protein S homolog EssQ (essQ), found in Escherichia coli (strain K12).